Reading from the N-terminus, the 215-residue chain is Urease accessory protein UreG 2 (215 aa).

GTP is bound at residue 11–18; sequence GPVGSGKT.

Belongs to the SIMIBI class G3E GTPase family. UreG subfamily. Homodimer. UreD, UreF and UreG form a complex that acts as a GTP-hydrolysis-dependent molecular chaperone, activating the urease apoprotein by helping to assemble the nickel containing metallocenter of UreC. The UreE protein probably delivers the nickel.

It is found in the cytoplasm. In terms of biological role, facilitates the functional incorporation of the urease nickel metallocenter. This process requires GTP hydrolysis, probably effectuated by UreG. This chain is Urease accessory protein UreG 2, found in Methylorubrum extorquens (strain PA1) (Methylobacterium extorquens).